The chain runs to 178 residues: ATP synthase subunit delta (178 aa).

Belongs to the ATPase delta chain family. As to quaternary structure, F-type ATPases have 2 components, F(1) - the catalytic core - and F(0) - the membrane proton channel. F(1) has five subunits: alpha(3), beta(3), gamma(1), delta(1), epsilon(1). F(0) has three main subunits: a(1), b(2) and c(10-14). The alpha and beta chains form an alternating ring which encloses part of the gamma chain. F(1) is attached to F(0) by a central stalk formed by the gamma and epsilon chains, while a peripheral stalk is formed by the delta and b chains.

Its subcellular location is the cell membrane. F(1)F(0) ATP synthase produces ATP from ADP in the presence of a proton or sodium gradient. F-type ATPases consist of two structural domains, F(1) containing the extramembraneous catalytic core and F(0) containing the membrane proton channel, linked together by a central stalk and a peripheral stalk. During catalysis, ATP synthesis in the catalytic domain of F(1) is coupled via a rotary mechanism of the central stalk subunits to proton translocation. In terms of biological role, this protein is part of the stalk that links CF(0) to CF(1). It either transmits conformational changes from CF(0) to CF(1) or is implicated in proton conduction. This is ATP synthase subunit delta from Streptococcus pyogenes serotype M6 (strain ATCC BAA-946 / MGAS10394).